The primary structure comprises 359 residues: DNA replication and repair protein RecF (359 aa).

An ATP-binding site is contributed by 30–37; it reads GPNGSGKT.

This sequence belongs to the RecF family.

The protein localises to the cytoplasm. In terms of biological role, the RecF protein is involved in DNA metabolism; it is required for DNA replication and normal SOS inducibility. RecF binds preferentially to single-stranded, linear DNA. It also seems to bind ATP. The protein is DNA replication and repair protein RecF of Vibrio parahaemolyticus serotype O3:K6 (strain RIMD 2210633).